The chain runs to 256 residues: Thiazole synthase (256 aa).

Lysine 95 acts as the Schiff-base intermediate with DXP in catalysis. Residues glycine 156, 182–183, and 204–205 each bind 1-deoxy-D-xylulose 5-phosphate; these read AG and NT.

The protein belongs to the ThiG family. In terms of assembly, homotetramer. Forms heterodimers with either ThiH or ThiS.

Its subcellular location is the cytoplasm. The catalysed reaction is [ThiS sulfur-carrier protein]-C-terminal-Gly-aminoethanethioate + 2-iminoacetate + 1-deoxy-D-xylulose 5-phosphate = [ThiS sulfur-carrier protein]-C-terminal Gly-Gly + 2-[(2R,5Z)-2-carboxy-4-methylthiazol-5(2H)-ylidene]ethyl phosphate + 2 H2O + H(+). It participates in cofactor biosynthesis; thiamine diphosphate biosynthesis. Catalyzes the rearrangement of 1-deoxy-D-xylulose 5-phosphate (DXP) to produce the thiazole phosphate moiety of thiamine. Sulfur is provided by the thiocarboxylate moiety of the carrier protein ThiS. In vitro, sulfur can be provided by H(2)S. This chain is Thiazole synthase, found in Shigella flexneri.